A 118-amino-acid polypeptide reads, in one-letter code: Non-specific lipid-transfer protein 3 (118 aa).

Residues 1-25 (MARAAATQLVLVAMVAAMLLVATDA) form the signal peptide. 4 disulfide bridges follow: Cys-29–Cys-77, Cys-39–Cys-54, Cys-55–Cys-100, and Cys-75–Cys-114.

The protein belongs to the plant LTP family.

In terms of biological role, plant non-specific lipid-transfer proteins transfer phospholipids as well as galactolipids across membranes. May play a role in wax or cutin deposition in the cell walls of expanding epidermal cells and certain secretory tissues. In Hordeum vulgare (Barley), this protein is Non-specific lipid-transfer protein 3 (LTP3).